The sequence spans 304 residues: Porphobilinogen deaminase (304 aa).

An S-(dipyrrolylmethanemethyl)cysteine modification is found at C240.

This sequence belongs to the HMBS family. As to quaternary structure, monomer. The cofactor is dipyrromethane.

It carries out the reaction 4 porphobilinogen + H2O = hydroxymethylbilane + 4 NH4(+). It participates in porphyrin-containing compound metabolism; protoporphyrin-IX biosynthesis; coproporphyrinogen-III from 5-aminolevulinate: step 2/4. Its function is as follows. Tetrapolymerization of the monopyrrole PBG into the hydroxymethylbilane pre-uroporphyrinogen in several discrete steps. This Xanthomonas euvesicatoria pv. vesicatoria (strain 85-10) (Xanthomonas campestris pv. vesicatoria) protein is Porphobilinogen deaminase.